The sequence spans 689 residues: DNA ligase (689 aa).

NAD(+) is bound by residues 40–44 (DSEYD), 89–90 (SL), and Glu121. Residue Lys123 is the N6-AMP-lysine intermediate of the active site. 4 residues coordinate NAD(+): Arg144, Glu179, Lys295, and Lys319. The Zn(2+) site is built by Cys413, Cys416, Cys431, and Cys437. In terms of domain architecture, BRCT spans 610-689 (REQSSLTDKI…EEWLTLIKNV (80 aa)).

It belongs to the NAD-dependent DNA ligase family. LigA subfamily. The cofactor is Mg(2+). It depends on Mn(2+) as a cofactor.

The catalysed reaction is NAD(+) + (deoxyribonucleotide)n-3'-hydroxyl + 5'-phospho-(deoxyribonucleotide)m = (deoxyribonucleotide)n+m + AMP + beta-nicotinamide D-nucleotide.. In terms of biological role, DNA ligase that catalyzes the formation of phosphodiester linkages between 5'-phosphoryl and 3'-hydroxyl groups in double-stranded DNA using NAD as a coenzyme and as the energy source for the reaction. It is essential for DNA replication and repair of damaged DNA. The polypeptide is DNA ligase (Rickettsia massiliae (strain Mtu5)).